A 512-amino-acid polypeptide reads, in one-letter code: 2'-5'-oligoadenylate synthase-like protein 1 (512 aa).

2 consecutive Ubiquitin-like domains span residues 351–430 and 431–507; these read IQVT…ISPE and IQVF…EGKA.

This sequence belongs to the 2-5A synthase family. As to quaternary structure, specifically interacts with the ligand binding domain of the thyroid receptor (TR). TRIP14 does not require the presence of thyroid hormone for its interaction. Binds MBD1.

It localises to the nucleus. It is found in the nucleolus. Its subcellular location is the cytoplasm. Does not have 2'-5'-OAS activity, but can bind double-stranded RNA. Displays antiviral activity via an alternative antiviral pathway independent of RNase L. The polypeptide is 2'-5'-oligoadenylate synthase-like protein 1 (Oasl) (Rattus norvegicus (Rat)).